We begin with the raw amino-acid sequence, 200 residues long: Dephospho-CoA kinase (200 aa).

A DPCK domain is found at 3 to 200; it reads IIGLTGGIGS…LWQRFATQVE (198 aa). ATP is bound at residue 11 to 16; sequence GSGKST.

Belongs to the CoaE family.

The protein resides in the cytoplasm. The enzyme catalyses 3'-dephospho-CoA + ATP = ADP + CoA + H(+). It functions in the pathway cofactor biosynthesis; coenzyme A biosynthesis; CoA from (R)-pantothenate: step 5/5. In terms of biological role, catalyzes the phosphorylation of the 3'-hydroxyl group of dephosphocoenzyme A to form coenzyme A. The chain is Dephospho-CoA kinase from Corynebacterium diphtheriae (strain ATCC 700971 / NCTC 13129 / Biotype gravis).